A 224-amino-acid chain; its full sequence is Octanoyltransferase (224 aa).

The BPL/LPL catalytic domain occupies 29–224 (PGTPDELWLC…GDRLESYLSP (196 aa)). Substrate contacts are provided by residues 68 to 75 (RGGQVTYH), 157 to 159 (ALG), and 170 to 172 (GLA). Catalysis depends on C188, which acts as the Acyl-thioester intermediate.

This sequence belongs to the LipB family.

Its subcellular location is the cytoplasm. The catalysed reaction is octanoyl-[ACP] + L-lysyl-[protein] = N(6)-octanoyl-L-lysyl-[protein] + holo-[ACP] + H(+). The protein operates within protein modification; protein lipoylation via endogenous pathway; protein N(6)-(lipoyl)lysine from octanoyl-[acyl-carrier-protein]: step 1/2. In terms of biological role, catalyzes the transfer of endogenously produced octanoic acid from octanoyl-acyl-carrier-protein onto the lipoyl domains of lipoate-dependent enzymes. Lipoyl-ACP can also act as a substrate although octanoyl-ACP is likely to be the physiological substrate. This Methylibium petroleiphilum (strain ATCC BAA-1232 / LMG 22953 / PM1) protein is Octanoyltransferase.